The chain runs to 642 residues: Chaperone protein DnaK (642 aa).

T199 is subject to Phosphothreonine; by autocatalysis. Positions 570–585 are enriched in basic and acidic residues; the sequence is EELEQASKDGDKEAID. The segment at 570–642 is disordered; sequence EELEQASKDG…FEEVKDDDKK (73 aa). The segment covering 600-620 has biased composition (low complexity); sequence EAAQQQQAQQGAEGAAGGEQQ. Residues 627 to 642 are compositionally biased toward acidic residues; it reads DVVDAEFEEVKDDDKK.

It belongs to the heat shock protein 70 family.

Its function is as follows. Acts as a chaperone. This is Chaperone protein DnaK from Idiomarina loihiensis (strain ATCC BAA-735 / DSM 15497 / L2-TR).